The chain runs to 202 residues: Small ribosomal subunit protein uS4 (202 aa).

A compositionally biased stretch (basic residues) spans 1-13 (MSRYRGPRLRVTR). Positions 1–42 (MSRYRGPRLRVTRRLGELPGLTRKASKKSNPPGQHGQARRKR) are disordered. Positions 90 to 152 (NRLDNVCFRL…KASKKLVEGN (63 aa)) constitute an S4 RNA-binding domain.

Belongs to the universal ribosomal protein uS4 family. As to quaternary structure, part of the 30S ribosomal subunit. Contacts protein S5. The interaction surface between S4 and S5 is involved in control of translational fidelity.

One of the primary rRNA binding proteins, it binds directly to 16S rRNA where it nucleates assembly of the body of the 30S subunit. Its function is as follows. With S5 and S12 plays an important role in translational accuracy. The chain is Small ribosomal subunit protein uS4 from Prochlorococcus marinus (strain MIT 9312).